Reading from the N-terminus, the 474-residue chain is PTS system MurNAc-GlcNAc-specific EIIBC component (474 aa).

The 83-residue stretch at 5–87 (ERLAKDITHA…ADQSGATLAE (83 aa)) folds into the PTS EIIB type-1 domain. Cysteine 27 functions as the Phosphocysteine intermediate; for EIIB activity in the catalytic mechanism. In terms of domain architecture, PTS EIIC type-1 spans 124 to 474 (KSIANIFIPL…GTTKEMRNPE (351 aa)). 10 helical membrane-spanning segments follow: residues 129–149 (IFIP…IAAI), 167–187 (IVTV…IFTG), 193–213 (VFGA…LTGI), 228–248 (LAAG…LSMV), 268–288 (ITLL…AGFV), 299–319 (IIGV…LPLV), 343–363 (LLPI…ALWV), 378–398 (ALPV…TLPL), 402–422 (FFTA…IGHI), and 444–464 (LGYI…TYFF).

It localises to the cell membrane. The enzyme catalyses N-acetyl-beta-D-muramate-(1-&gt;4)-N-acetyl-D-glucosamine(out) + N(pros)-phospho-L-histidyl-[protein] = 6-phospho-N-acetyl-beta-D-muramate-(1-&gt;4)-N-acetyl-D-glucosamine(in) + L-histidyl-[protein]. It functions in the pathway cell wall biogenesis; peptidoglycan recycling. Functionally, the phosphoenolpyruvate-dependent sugar phosphotransferase system (sugar PTS), a major carbohydrate active transport system, catalyzes the phosphorylation of incoming sugar substrates concomitantly with their translocation across the cell membrane. This system is involved in the uptake and phosphorylation of MurNAc-GlcNAc, the principle peptidoglycan turnover product of S.aureus, yielding cytoplasmic MurNAc 6P-GlcNAc. In Staphylococcus epidermidis (strain ATCC 35984 / DSM 28319 / BCRC 17069 / CCUG 31568 / BM 3577 / RP62A), this protein is PTS system MurNAc-GlcNAc-specific EIIBC component.